Here is a 629-residue protein sequence, read N- to C-terminus: Proteoglycan Cow (629 aa).

Residues M1–A27 form the signal peptide. Disordered regions lie at residues K118 to E186 and G198 to E223. Residues D128–S143 show a composition bias toward acidic residues. N-linked (GlcNAc...) asparagine glycosylation occurs at N142. The span at S144–A159 shows a compositional bias: low complexity. Over residues E167–E186 the composition is skewed to acidic residues. Positions D222 to P273 constitute a Kazal-like domain. Intrachain disulfides connect C228–C258, C231–C251, and C240–C272. An N-linked (GlcNAc...) asparagine glycan is attached at N244. The segment at S298–N356 is disordered. Residues Q301–N340 are compositionally biased toward low complexity. 2 EF-hand domains span residues A468 to R503 and F508 to P535. The Ca(2+) site is built by D481, N483, D485, Q487, and E492. The 62-residue stretch at D533–C594 folds into the Thyroglobulin type-1 domain. 3 cysteine pairs are disulfide-bonded: C536-C555, C566-C573, and C575-C594. The tract at residues A602–F629 is disordered. Residues S606–A619 show a composition bias toward acidic residues. The segment covering E620–F629 has biased composition (low complexity).

As to quaternary structure, interacts (in heparan sulfate-bound form) with wg. Post-translationally, contains heparan sulfate O-linked oligosaccharides. In the wing disk, detected throughout the disk where it is localized primarily to the apical surface but is also present at the basal surface (at protein level).

The protein localises to the secreted. In terms of biological role, binds to the Wnt signaling protein wg, stabilizes it and promotes its extracellular distribution. This is required for establishment of a wg gradient during development to allow for regulation of target genes at different levels. This Drosophila melanogaster (Fruit fly) protein is Proteoglycan Cow.